We begin with the raw amino-acid sequence, 142 residues long: Small heat shock protein IbpB (142 aa).

A sHSP domain is found at 26-137 (AGESQSFPPY…APQRIAISER (112 aa)).

This sequence belongs to the small heat shock protein (HSP20) family. Homodimer. Forms homomultimers of about 100-150 subunits at optimal growth temperatures. Conformation changes to oligomers at high temperatures or high ionic concentrations. The decrease in size of the multimers is accompanied by an increase in chaperone activity.

Its subcellular location is the cytoplasm. Associates with aggregated proteins, together with IbpA, to stabilize and protect them from irreversible denaturation and extensive proteolysis during heat shock and oxidative stress. Aggregated proteins bound to the IbpAB complex are more efficiently refolded and reactivated by the ATP-dependent chaperone systems ClpB and DnaK/DnaJ/GrpE. Its activity is ATP-independent. The chain is Small heat shock protein IbpB from Klebsiella pneumoniae (strain 342).